We begin with the raw amino-acid sequence, 134 residues long: Iron-sulfur cluster insertion protein ErpA (134 aa).

3 residues coordinate iron-sulfur cluster: C47, C126, and C128.

Belongs to the HesB/IscA family. Homodimer. The cofactor is iron-sulfur cluster.

Its function is as follows. Required for insertion of 4Fe-4S clusters for at least IspG. The sequence is that of Iron-sulfur cluster insertion protein ErpA from Coxiella burnetii (strain RSA 331 / Henzerling II).